A 1085-amino-acid chain; its full sequence is Solute carrier family 12 member 4 (1085 aa).

Residues 1–119 (MPHFTVVPVD…RRAAKAPSMG (119 aa)) lie on the Cytoplasmic side of the membrane. Residue S24 is modified to Phosphoserine. Basic and acidic residues predominate over residues 28–46 (YGERAEREDPDGHGNHRES). The disordered stretch occupies residues 28–47 (YGERAEREDPDGHGNHRESS). A phosphoserine mark is found at S47, S59, S81, and S88. The discontinuously helical transmembrane segment at 120 to 141 (TLMGVYLPCLQNIFGVILFLRL) threads the bilayer. Positions 131 and 132 each coordinate K(+). At 142–149 (TWMVGTAG) the chain is on the extracellular side. Residues 150-172 (VLQALLIVLICCCCTLLTAISMS) form a helical membrane-spanning segment. Topologically, residues 173–196 (AIATNGVVPAGGSYFMISRSLGPE) are cytoplasmic. The chain crosses the membrane as a helical span at residues 197 to 225 (FGGAVGLCFYLGTTFAAAMYILGAIEILL). Y216 is a binding site for K(+). Topologically, residues 226 to 248 (TYIAPPAAIFYPSGTHDTSNATL) are extracellular. The N-linked (GlcNAc...) asparagine glycan is linked to N245. 2 helical membrane-spanning segments follow: residues 249–271 (NNMR…VGVK) and 272–297 (YVNK…GGIK). Residues 298 to 419 (SMFDPPVFPV…LYVVADIATS (122 aa)) are Extracellular-facing. The cysteines at positions 308 and 323 are disulfide-linked. N-linked (GlcNAc...) asparagine glycans are attached at residues N312, N331, and N347. An intrachain disulfide couples C343 to C353. A helical transmembrane segment spans residues 420-440 (FTVLVGIFFPSVTGIMAGSNR). The K(+) site is built by P429 and T432. Residues G433, I434, and M435 each coordinate chloride. The Cytoplasmic portion of the chain corresponds to 441–450 (SGDLRDAQKS). A helical transmembrane segment spans residues 451 to 473 (IPVGTILAIVTTSLVYFSSVVLF). Residues 474–504 (GACIEGVVLRDKYGDGVSRNLVVGTLAWPSP) are Extracellular-facing. Residues 505–531 (WVIVVGSFFSTCGAGLQSLTGAPRLLQ) form a helical membrane-spanning segment. Residues 532 to 554 (AIAKDNIIPFLRVFGHGKANGEP) are Cytoplasmic-facing. A run of 2 helical transmembrane segments spans residues 555-575 (TWAL…ASLD) and 576-598 (MVAP…ACAV). Y589 is a binding site for chloride. Over 599–612 (QTLLRTPNWRPRFK) the chain is Cytoplasmic. 2 consecutive transmembrane segments (helical) span residues 613-635 (YYHW…VSSW) and 636-651 (YYAL…IYKY). Residues 652–1085 (IEYQGAEKEW…GGREVITIYS (434 aa)) are Cytoplasmic-facing. Positions 665-681 (IRGLSLSAARYALLRLE) are scissor helix. The ATP site is built by L697, K699, K707, Y708, and V730. The residue at position 734 (S734) is a Phosphoserine. G794, W795, and Y797 together coordinate ATP. Phosphoserine is present on residues S916 and S967. T983 bears the Phosphothreonine mark. Residue S1050 is modified to Phosphoserine.

The protein belongs to the SLC12A transporter family. K/Cl co-transporter subfamily. In terms of assembly, homodimer; adopts a domain-swap conformation at the scissor helices connecting the transmembrane domain and C-terminal domain. Heterodimer with other K-Cl cotransporters. N-glycosylated. In terms of processing, phosphorylated, phosphorylation may regulate transporter activity.

The protein localises to the cell membrane. The catalysed reaction is K(+)(in) + chloride(in) = K(+)(out) + chloride(out). Its activity is regulated as follows. Inhibited by WNK3. Its function is as follows. Mediates electroneutral potassium-chloride cotransport when activated by cell swelling. May contribute to cell volume homeostasis in single cells. May be involved in the regulation of basolateral Cl(-) exit in NaCl absorbing epithelia. The chain is Solute carrier family 12 member 4 (SLC12A4) from Oryctolagus cuniculus (Rabbit).